We begin with the raw amino-acid sequence, 450 residues long: D-inositol 3-phosphate glycosyltransferase (450 aa).

His-26 lines the 1D-myo-inositol 3-phosphate pocket. UDP-N-acetyl-alpha-D-glucosamine-binding positions include Gln-32–Pro-33 and Gly-40. Residues Asp-37–Asn-42, Lys-95, Tyr-128, Thr-152, and Arg-172 each bind 1D-myo-inositol 3-phosphate. 3 residues coordinate UDP-N-acetyl-alpha-D-glucosamine: Arg-246, Lys-251, and Gln-313. The Mg(2+) site is built by Tyr-322, Arg-323, and Ala-325. The UDP-N-acetyl-alpha-D-glucosamine site is built by Glu-335 and Glu-343. Thr-349 lines the Mg(2+) pocket.

This sequence belongs to the glycosyltransferase group 1 family. MshA subfamily. In terms of assembly, homodimer.

It carries out the reaction 1D-myo-inositol 3-phosphate + UDP-N-acetyl-alpha-D-glucosamine = 1D-myo-inositol 2-acetamido-2-deoxy-alpha-D-glucopyranoside 3-phosphate + UDP + H(+). In terms of biological role, catalyzes the transfer of a N-acetyl-glucosamine moiety to 1D-myo-inositol 3-phosphate to produce 1D-myo-inositol 2-acetamido-2-deoxy-glucopyranoside 3-phosphate in the mycothiol biosynthesis pathway. In Mycolicibacterium vanbaalenii (strain DSM 7251 / JCM 13017 / BCRC 16820 / KCTC 9966 / NRRL B-24157 / PYR-1) (Mycobacterium vanbaalenii), this protein is D-inositol 3-phosphate glycosyltransferase.